The primary structure comprises 426 residues: Cytochrome c biogenesis protein CcsB (426 aa).

3 consecutive transmembrane segments (helical) span residues 14–34 (LKIA…GTLI), 72–92 (SFWF…CSFR), and 162–182 (LGPI…TYGS).

It belongs to the Ccs1/CcsB family. In terms of assembly, may interact with CcsA.

It localises to the cellular thylakoid membrane. Required during biogenesis of c-type cytochromes (cytochrome c6 and cytochrome f) at the step of heme attachment. The polypeptide is Cytochrome c biogenesis protein CcsB (Prochlorococcus marinus (strain NATL1A)).